A 224-amino-acid polypeptide reads, in one-letter code: C-reactive protein (224 aa).

Residues 1-18 (MEKLLCFLVLTSLSHAFG) form the signal peptide. A Pyrrolidone carboxylic acid modification is found at Q19. Positions 23 to 224 (SRKAFVFPKE…EVFTKPQLWP (202 aa)) constitute a Pentraxin (PTX) domain. The cysteines at positions 54 and 115 are disulfide-linked. Ca(2+)-binding residues include D78, N79, E156, Q157, D158, and Q168.

Belongs to the pentraxin family. In terms of assembly, homopentamer. Pentraxin (or pentaxin) have a discoid arrangement of 5 non-covalently bound subunits. Interacts with FCN1; may regulate monocyte activation by FCN1. It depends on Ca(2+) as a cofactor. In terms of tissue distribution, found in plasma.

It localises to the secreted. Functionally, displays several functions associated with host defense: it promotes agglutination, bacterial capsular swelling, phagocytosis and complement fixation through its calcium-dependent binding to phosphorylcholine. Can interact with DNA and histones and may scavenge nuclear material released from damaged circulating cells. The polypeptide is C-reactive protein (CRP) (Homo sapiens (Human)).